Consider the following 344-residue polypeptide: N-acetyl-gamma-glutamyl-phosphate reductase (344 aa).

Cys-149 is a catalytic residue.

The protein belongs to the NAGSA dehydrogenase family. Type 1 subfamily.

The protein resides in the cytoplasm. The catalysed reaction is N-acetyl-L-glutamate 5-semialdehyde + phosphate + NADP(+) = N-acetyl-L-glutamyl 5-phosphate + NADPH + H(+). It functions in the pathway amino-acid biosynthesis; L-arginine biosynthesis; N(2)-acetyl-L-ornithine from L-glutamate: step 3/4. Its function is as follows. Catalyzes the NADPH-dependent reduction of N-acetyl-5-glutamyl phosphate to yield N-acetyl-L-glutamate 5-semialdehyde. In Thermoanaerobacter sp. (strain X514), this protein is N-acetyl-gamma-glutamyl-phosphate reductase.